The following is a 180-amino-acid chain: Thiol:disulfide interchange protein TxlA homolog (180 aa).

A helical membrane pass occupies residues 10–26 (LLAVVAIALSAAVYLGF). The Thioredoxin domain maps to 34–143 (SLEAQAQRAI…LEQNITALVA (110 aa)). Cysteine 64 and cysteine 67 are joined by a disulfide.

The protein belongs to the thioredoxin family.

Its subcellular location is the cell membrane. Functionally, required for disulfide bond formation in some proteins. Acts by transferring its disulfide bond to other proteins and is reduced in the process. This Synechocystis sp. (strain ATCC 27184 / PCC 6803 / Kazusa) protein is Thiol:disulfide interchange protein TxlA homolog (txlA).